Consider the following 306-residue polypeptide: Agmatinase (306 aa).

His126, Asp149, His151, Asp153, Asp230, and Asp232 together coordinate Mn(2+).

This sequence belongs to the arginase family. Agmatinase subfamily. It depends on Mn(2+) as a cofactor.

It carries out the reaction agmatine + H2O = urea + putrescine. Its pathway is amine and polyamine biosynthesis; putrescine biosynthesis via agmatine pathway; putrescine from agmatine: step 1/1. Its function is as follows. Catalyzes the formation of putrescine from agmatine. In Shigella boydii serotype 18 (strain CDC 3083-94 / BS512), this protein is Agmatinase.